The primary structure comprises 349 residues: Phosphoribosylformylglycinamidine cyclo-ligase (349 aa).

This sequence belongs to the AIR synthase family.

It is found in the cytoplasm. It catalyses the reaction 2-formamido-N(1)-(5-O-phospho-beta-D-ribosyl)acetamidine + ATP = 5-amino-1-(5-phospho-beta-D-ribosyl)imidazole + ADP + phosphate + H(+). It functions in the pathway purine metabolism; IMP biosynthesis via de novo pathway; 5-amino-1-(5-phospho-D-ribosyl)imidazole from N(2)-formyl-N(1)-(5-phospho-D-ribosyl)glycinamide: step 2/2. This is Phosphoribosylformylglycinamidine cyclo-ligase from Lactobacillus helveticus (strain DPC 4571).